We begin with the raw amino-acid sequence, 328 residues long: Dof zinc finger protein PBF (328 aa).

The segment at 33–56 is disordered; that stretch reads RDPKQTRAMPQIGGSGERKPRPQL. The Dof-type zinc finger occupies 60–114; sequence LKCPRCDSNNTKFCYYNNYSMSQPRYFCKACRRYWTHGGTLRNVPIGGGCRKNKH. The Zn(2+) site is built by cysteine 62, cysteine 65, cysteine 87, and cysteine 90. 2 disordered regions span residues 124 to 144 and 306 to 328; these read TSSS…ASSS and WNKH…NKGQ.

In terms of assembly, interacts with the bZIP transcription factor Opaque-2/O2. In terms of tissue distribution, seed endosperm.

The protein localises to the nucleus. Its function is as follows. Transcription factor that binds specifically to a 5'-AA[AG]G-3' consensus core sequence. May enhance the DNA binding of the bZIP transcription factor Opaque-2 to O2 binding site elements. In Zea mays (Maize), this protein is Dof zinc finger protein PBF (PBF).